We begin with the raw amino-acid sequence, 56 residues long: uncharacterized protein (56 aa).

This is an uncharacterized protein from Homo sapiens (Human).